The chain runs to 2128 residues: MTSATEFENVGNQPPFSRINARWDAPDDELDNDNSSARLFERSRIKALADEREVVQKKTFTKWVNSHLARVSCRISDLYKDLRDGRMLIKLLEVLSGEMLPRPTKGKMRIHCLENVDKALQFLKEQRVHLENMGSHDIVDGNHRLVLGLIWTIILRFQIQDIVVQTQEGREQRSAKDALLLWCQMKTAGYPHVNVTNFTSSWKDGLAFNALIHKHRPDLIDFDKLKDSNARHNLEHAFDVAERQLGIIPLLDPEDVFTENPDEKSIITYVVAFYHYFSKMKVLAVEGKRVGKVIDHAIETEKMIEKYSGLASDLLTWIEQTISVLNSRKFANSLSGVQQQLQAFSTYRTVEKPPKFQEKGNLEVLLFTIQSRMRANNQKVYTPHDGKLVSDINRAWESLEEAEYQRELALRSELIRQEFDRKAAMRETWLNENQRLVTQDNFGYDLAAVEAAKKKHEAIETDTAAYEERVKALEDLAQELEKENYHDQKRIIARKDNILRLWSYLQELLRSRRQRLEATLALQKLFQDMLHSIDWMDEIKAHILSAEFGKHLLEVEDLLQKHKLMEADIAIQGDKVKAITAATLQFAEGKGYQPCDPQVIQDRVSHLEQCFSELSNMAAGRKAQLEQSKRLWKFFWEMDEAESWIKEKEQIYSSLDYGKDLTSVLILQRKHKAFEDELRGLDAHLKQIFQEADDMVAQKQFGHPQIETRVKEVSAQWDHLKELAAFRKKDLQDAENFFQFQGDADDLKAWLQDAHRLLSGEDVGQDEGATRALGKKHKEFLEELEESRGVMEHLEHQAQGFPEEFRDSPDVTNRLQALRKLYQQVLTQAELRGHKLQEALDLYTVFGESDACELWMTEKGKWLDQMDIPNTLEDLEVVQHRFDILDQEMKTLMAQIDGVNLAANNLVESGHPRSGEVKQYQDRLNKRWQAFQAVVSEQREAVDSALRVNNYCVDCEETSKWIMDKTKVVESTKDLGQDLAGVIAIQRKLSGLERDVLAIRDRVSALERESQYLMESHPEQKEDIGQRQADVEKLWKGLQDALQGQELSLGEASKLQAFLQDLDDFKAWLSMAQKAVASEDMPESLPEAEQLLQQHAAIKEEIDAHRDDYHRVKASGEKVIEGQTDPDYQLLGQRLEGLDTDWDALRRMWESRGNTLTQCLGFQEFQKDAKQAEAILSNQEYTLAHLEPPDSLAAAEAGIRKFEDFLVSMENNRDKILSPVDSGNKLVAEGNLYSNKIMEKVQLIEDRHKKNNEKAQEATVLLKDNLELQNFLQNCKELTLWINDKLLTSPDVSYDEARNLHNKWMKHQAFMAELASHQGWLENIDAEGRQLMAEKPQFKDVVSERLEALHKLWEELQSTAKAKAEQLSAARSSDLRLQTHADLNKWIGAMEDQLRSDDLGKDLTTVNRMLAKLKRVEEQVNLRKEELEELFADAPSLGAEAGDTDMSIEKRFLDLLEPLGRRKKQLELSKAKLQISRDLEDETLWVEERLPLAQSADYGTNLQTVQLFMKKNQTLQNEILGHAPRVEDVLRRGQELVKAAEIDCQDIEERLGHLQSSWDTLREAAAGRLQRLRDAHEAQQYYLDAGEAEAWISEQELYVFSDEPPKDEEGAIVMLKRHLRQQRTVEEYGRNIKQLAGRAQSLLSAGHPEGEQIIRLQGQVDKQYAGLKDMAEERRRRLENMYHLFQLKREADDLEQWITEKEMVASSQEMGQDFDHVTMLRDKFRDFARETGAIGQERVDNVTIIERLIDAGHSEAATIAEWKDGLNDMWADLLELIDTRMQLLAASYDLHRYFYTGTEILGLIDEKHRELPEDVGLDASTAESFHRVHTAFERELHLLGVQVQQFQDVATRLQTAYAGEKADAIQSKEQEVSAAWQALLDACAGRRAQLVDTADKFRFFSMVRDLLSWMESIIRQIETQERPRDVSSVELLLKYHQGIKAEINTRAKNFSTCLELGESLLQRQHQASDEIREKLQQVISRRQEMNDKWEARSDRLHMLLEVCQFSRDASVAEAWLIAQEPYLASRDFGHTVDSVEKLIKRHEAFEKSTASWAERFAALEKPTTLELKERQTPERPTEEPGPQEEEGETAGEAPQVHHAATERTSPVSFMSRLSSSWESLLPEPAHPF.

The segment covering 1–15 (MTSATEFENVGNQPP) has biased composition (polar residues). The interval 1-30 (MTSATEFENVGNQPPFSRINARWDAPDDEL) is disordered. The tract at residues 2–275 (TSATEFENVG…IITYVVAFYH (274 aa)) is actin-binding. Position 36 is a phosphoserine (Ser36). 2 consecutive Calponin-homology (CH) domains span residues 54–158 (VVQK…LRFQ) and 173–278 (RSAK…HYFS). Position 104 is a phosphothreonine (Thr104). Spectrin repeat units lie at residues 303–411 (MIEK…LALR), 416–517 (RQEF…QRLE), 521–627 (ALQK…QLEQ), 630–733 (RLWK…DLQD), 736–838 (NFFQ…KLQE), 845–942 (VFGE…REAV), 950–1050 (NYCV…LSLG), 1054–1157 (KLQA…NTLT), 1162–1250 (FQEF…RHKK), 1267–1368 (ELQN…EQLS), 1381–1455 (ADLN…FLDL), 1473–1574 (LQIS…RLRD), 1576–1680 (HEAQ…RLEN), 1682–1784 (YHLF…MQLL), 1789–1890 (DLHR…RAQL), 1897–1997 (FRFF…DRLH), and 2004–2064 (QFSR…KPTT). Position 1289 is a phosphoserine (Ser1289). Ser2034 is subject to Phosphoserine. The tract at residues 2062–2108 (PTTLELKERQTPERPTEEPGPQEEEGETAGEAPQVHHAATERTSPVS) is disordered. 3 positions are modified to phosphothreonine: Thr2064, Thr2072, and Thr2101. Positions 2066–2078 (ELKERQTPERPTE) are enriched in basic and acidic residues. 5 positions are modified to phosphoserine: Ser2105, Ser2108, Ser2114, Ser2116, and Ser2119.

The protein belongs to the spectrin family. Composed of nonhomologous chains, alpha and beta, which aggregate to form dimers, tetramers, and higher polymers. Interacts with BCAM.

It localises to the cytoplasm. Its subcellular location is the cytoskeleton. The protein resides in the cell cortex. In terms of biological role, spectrin is the major constituent of the cytoskeletal network underlying the erythrocyte plasma membrane. It associates with band 4.1 and actin to form the cytoskeletal superstructure of the erythrocyte plasma membrane. The protein is Spectrin beta chain, erythrocytic (Sptb) of Mus musculus (Mouse).